The sequence spans 93 residues: Small ribosomal subunit protein uS19 (93 aa).

It belongs to the universal ribosomal protein uS19 family.

Functionally, protein S19 forms a complex with S13 that binds strongly to the 16S ribosomal RNA. The protein is Small ribosomal subunit protein uS19 (rpsS) of Helicobacter pylori (strain ATCC 700392 / 26695) (Campylobacter pylori).